Consider the following 488-residue polypeptide: Glycogen synthase (488 aa).

Position 20 (Arg20) interacts with ADP-alpha-D-glucose.

Belongs to the glycosyltransferase 1 family. Bacterial/plant glycogen synthase subfamily.

The catalysed reaction is [(1-&gt;4)-alpha-D-glucosyl](n) + ADP-alpha-D-glucose = [(1-&gt;4)-alpha-D-glucosyl](n+1) + ADP + H(+). Its pathway is glycan biosynthesis; glycogen biosynthesis. In terms of biological role, synthesizes alpha-1,4-glucan chains using ADP-glucose. This Chlorobaculum tepidum (strain ATCC 49652 / DSM 12025 / NBRC 103806 / TLS) (Chlorobium tepidum) protein is Glycogen synthase.